The primary structure comprises 295 residues: UDP-N-acetylenolpyruvoylglucosamine reductase (295 aa).

An FAD-binding PCMH-type domain is found at 24-188 (KVGGNAEIFF…LKAVFKINKG (165 aa)). Arg168 is an active-site residue. The active-site Proton donor is the Ser217. Glu287 is a catalytic residue.

Belongs to the MurB family. It depends on FAD as a cofactor.

It localises to the cytoplasm. The enzyme catalyses UDP-N-acetyl-alpha-D-muramate + NADP(+) = UDP-N-acetyl-3-O-(1-carboxyvinyl)-alpha-D-glucosamine + NADPH + H(+). It participates in cell wall biogenesis; peptidoglycan biosynthesis. Cell wall formation. In Rickettsia massiliae (strain Mtu5), this protein is UDP-N-acetylenolpyruvoylglucosamine reductase.